Here is an 87-residue protein sequence, read N- to C-terminus: MAKSSTKRRPAPEKPVKTRKCVFCSKKGKNQDIDYKDTQLLRTYISERGKIRARRVTGNCVQHQRDIAIAVKNAREVALLPFSSSTR.

This sequence belongs to the bacterial ribosomal protein bS18 family. As to quaternary structure, part of the 30S ribosomal subunit. Forms a tight heterodimer with protein bS6.

Its function is as follows. Binds as a heterodimer with protein bS6 to the central domain of the 16S rRNA, where it helps stabilize the platform of the 30S subunit. The polypeptide is Small ribosomal subunit protein bS18B (Mycolicibacterium vanbaalenii (strain DSM 7251 / JCM 13017 / BCRC 16820 / KCTC 9966 / NRRL B-24157 / PYR-1) (Mycobacterium vanbaalenii)).